A 286-amino-acid chain; its full sequence is Bifunctional protein FolD (286 aa).

Residues 165–167 (GRS), Ser-190, and Val-231 each bind NADP(+).

This sequence belongs to the tetrahydrofolate dehydrogenase/cyclohydrolase family. Homodimer.

The enzyme catalyses (6R)-5,10-methylene-5,6,7,8-tetrahydrofolate + NADP(+) = (6R)-5,10-methenyltetrahydrofolate + NADPH. It catalyses the reaction (6R)-5,10-methenyltetrahydrofolate + H2O = (6R)-10-formyltetrahydrofolate + H(+). It functions in the pathway one-carbon metabolism; tetrahydrofolate interconversion. Its function is as follows. Catalyzes the oxidation of 5,10-methylenetetrahydrofolate to 5,10-methenyltetrahydrofolate and then the hydrolysis of 5,10-methenyltetrahydrofolate to 10-formyltetrahydrofolate. This chain is Bifunctional protein FolD, found in Bacillus cereus (strain ATCC 14579 / DSM 31 / CCUG 7414 / JCM 2152 / NBRC 15305 / NCIMB 9373 / NCTC 2599 / NRRL B-3711).